Here is a 33-residue protein sequence, read N- to C-terminus: PRRRRRRSSSRPIRRRRPRRVSRRRRRGGRRRR.

Residues 1-33 (PRRRRRRSSSRPIRRRRPRRVSRRRRRGGRRRR) are disordered.

Testis.

The protein resides in the nucleus. The protein localises to the chromosome. Its function is as follows. Protamines substitute for histones in the chromatin of sperm during the haploid phase of spermatogenesis. They compact sperm DNA into a highly condensed, stable and inactive complex. The chain is Protamine-1B from Oncorhynchus mykiss (Rainbow trout).